Reading from the N-terminus, the 392-residue chain is 23S rRNA (uracil(747)-C(5))-methyltransferase RlmC (392 aa).

[4Fe-4S] cluster-binding residues include cysteine 4, cysteine 12, cysteine 15, and cysteine 93. Glutamine 218, phenylalanine 247, glutamate 275, and asparagine 321 together coordinate S-adenosyl-L-methionine. The Nucleophile role is filled by cysteine 348.

It belongs to the class I-like SAM-binding methyltransferase superfamily. RNA M5U methyltransferase family. RlmC subfamily.

The catalysed reaction is uridine(747) in 23S rRNA + S-adenosyl-L-methionine = 5-methyluridine(747) in 23S rRNA + S-adenosyl-L-homocysteine + H(+). Catalyzes the formation of 5-methyl-uridine at position 747 (m5U747) in 23S rRNA. The polypeptide is 23S rRNA (uracil(747)-C(5))-methyltransferase RlmC (Haemophilus influenzae (strain PittEE)).